The chain runs to 89 residues: MALDAETKKSIIDEYATHPGDTGSPEVQVAILTQRIRDLTEHLKEHKHDHHSRRGLLLLVGQRRRLLGYLADIDISRYRALIERLGLRR.

Belongs to the universal ribosomal protein uS15 family. As to quaternary structure, part of the 30S ribosomal subunit. Forms a bridge to the 50S subunit in the 70S ribosome, contacting the 23S rRNA.

Functionally, one of the primary rRNA binding proteins, it binds directly to 16S rRNA where it helps nucleate assembly of the platform of the 30S subunit by binding and bridging several RNA helices of the 16S rRNA. In terms of biological role, forms an intersubunit bridge (bridge B4) with the 23S rRNA of the 50S subunit in the ribosome. This chain is Small ribosomal subunit protein uS15, found in Leifsonia xyli subsp. xyli (strain CTCB07).